The sequence spans 361 residues: UDP-N-acetylglucosamine--N-acetylmuramyl-(pentapeptide) pyrophosphoryl-undecaprenol N-acetylglucosamine transferase (361 aa).

Residues 11–13, Asn-124, Arg-164, Ser-192, and Gln-295 each bind UDP-N-acetyl-alpha-D-glucosamine; that span reads TGG.

This sequence belongs to the glycosyltransferase 28 family. MurG subfamily.

The protein localises to the cell membrane. It catalyses the reaction di-trans,octa-cis-undecaprenyl diphospho-N-acetyl-alpha-D-muramoyl-L-alanyl-D-glutamyl-meso-2,6-diaminopimeloyl-D-alanyl-D-alanine + UDP-N-acetyl-alpha-D-glucosamine = di-trans,octa-cis-undecaprenyl diphospho-[N-acetyl-alpha-D-glucosaminyl-(1-&gt;4)]-N-acetyl-alpha-D-muramoyl-L-alanyl-D-glutamyl-meso-2,6-diaminopimeloyl-D-alanyl-D-alanine + UDP + H(+). It participates in cell wall biogenesis; peptidoglycan biosynthesis. In terms of biological role, cell wall formation. Catalyzes the transfer of a GlcNAc subunit on undecaprenyl-pyrophosphoryl-MurNAc-pentapeptide (lipid intermediate I) to form undecaprenyl-pyrophosphoryl-MurNAc-(pentapeptide)GlcNAc (lipid intermediate II). This is UDP-N-acetylglucosamine--N-acetylmuramyl-(pentapeptide) pyrophosphoryl-undecaprenol N-acetylglucosamine transferase from Deinococcus geothermalis (strain DSM 11300 / CIP 105573 / AG-3a).